A 214-amino-acid polypeptide reads, in one-letter code: Urease accessory protein UreG 2 (214 aa).

Residue 22 to 29 participates in GTP binding; the sequence is GPVGSGKT.

It belongs to the SIMIBI class G3E GTPase family. UreG subfamily. In terms of assembly, homodimer. UreD, UreF and UreG form a complex that acts as a GTP-hydrolysis-dependent molecular chaperone, activating the urease apoprotein by helping to assemble the nickel containing metallocenter of UreC. The UreE protein probably delivers the nickel.

It localises to the cytoplasm. In terms of biological role, facilitates the functional incorporation of the urease nickel metallocenter. This process requires GTP hydrolysis, probably effectuated by UreG. The chain is Urease accessory protein UreG 2 from Bradyrhizobium sp. (strain BTAi1 / ATCC BAA-1182).